A 68-amino-acid polypeptide reads, in one-letter code: Large ribosomal subunit protein uL29 (68 aa).

Belongs to the universal ribosomal protein uL29 family.

The polypeptide is Large ribosomal subunit protein uL29 (Nitrobacter hamburgensis (strain DSM 10229 / NCIMB 13809 / X14)).